We begin with the raw amino-acid sequence, 304 residues long: MADGSELYTVESILEHRKKKGKSEFYIKWLGYDHTHNSWEPKENIVDPTLIEAFFTREAARKAEIKAKKDKMAAGKKGASSKASASVSKASASTPARGAKAAPKPPPKKSPPKRQRLAGGDIRPDSDTDEEHSSADKKSKAEDEEEVEDDEEPVPKKKKEVQEEPEEEESVEGEDEEESQEVEDLKEDEKMEEDEKEEEEDVQLESEKNEKEEEEEKVEEKKEEEEEEEEEEIQLVIVEKTVIETTIVEPAVATPEPSEPSSSEKAVVENGSSSAAAGNSASKPEVSAVEVVTVEDDDDIAIIE.

Residues 8–66 (YTVESILEHRKKKGKSEFYIKWLGYDHTHNSWEPKENIVDPTLIEAFFTREAARKAEIK) form the Chromo domain. Positions 63–73 (AEIKAKKDKMA) are enriched in basic and acidic residues. 2 disordered regions span residues 63–235 (AEIK…EIQL) and 248–304 (VEPA…AIIE). Low complexity predominate over residues 75-102 (GKKGASSKASASVSKASASTPARGAKAA). Over residues 106-116 (PPKKSPPKRQR) the composition is skewed to basic residues. Residues 122-141 (IRPDSDTDEEHSSADKKSKA) show a composition bias toward basic and acidic residues. Composition is skewed to acidic residues over residues 142–152 (EDEEEVEDDEE), 163–204 (EEPE…DVQL), and 212–233 (EEEE…EEEI). A compositionally biased stretch (low complexity) spans 248-292 (VEPAVATPEPSEPSSSEKAVVENGSSSAAAGNSASKPEVSAVEVV). Residues 293–304 (TVEDDDDIAIIE) show a composition bias toward acidic residues.

It is found in the nucleus. The protein localises to the chromosome. The protein is Chromo domain-containing protein cec-1 (cec-1) of Caenorhabditis elegans.